The chain runs to 218 residues: Pyridoxine/pyridoxamine 5'-phosphate oxidase (218 aa).

Substrate contacts are provided by residues 14–17 and lysine 72; that span reads RREY. FMN contacts are provided by residues 67–72, 82–83, arginine 88, lysine 89, and glutamine 111; these read RIVLLK and YT. 3 residues coordinate substrate: tyrosine 129, arginine 133, and serine 137. FMN contacts are provided by residues 146 to 147 and tryptophan 191; that span reads QS. 197–199 provides a ligand contact to substrate; sequence RLH. Arginine 201 provides a ligand contact to FMN.

It belongs to the pyridoxamine 5'-phosphate oxidase family. In terms of assembly, homodimer. The cofactor is FMN.

The enzyme catalyses pyridoxamine 5'-phosphate + O2 + H2O = pyridoxal 5'-phosphate + H2O2 + NH4(+). The catalysed reaction is pyridoxine 5'-phosphate + O2 = pyridoxal 5'-phosphate + H2O2. It functions in the pathway cofactor metabolism; pyridoxal 5'-phosphate salvage; pyridoxal 5'-phosphate from pyridoxamine 5'-phosphate: step 1/1. The protein operates within cofactor metabolism; pyridoxal 5'-phosphate salvage; pyridoxal 5'-phosphate from pyridoxine 5'-phosphate: step 1/1. Its function is as follows. Catalyzes the oxidation of either pyridoxine 5'-phosphate (PNP) or pyridoxamine 5'-phosphate (PMP) into pyridoxal 5'-phosphate (PLP). This Cronobacter sakazakii (strain ATCC BAA-894) (Enterobacter sakazakii) protein is Pyridoxine/pyridoxamine 5'-phosphate oxidase.